The following is a 310-amino-acid chain: Alpha/beta hydrolase domain-containing protein 17A (310 aa).

A disordered region spans residues 38–61 (VPEPEPGPGGAGAAPSGPLRTSAA). Catalysis depends on charge relay system residues Ser190, Asp255, and His284. Ser307 is subject to Phosphoserine.

Belongs to the AB hydrolase superfamily. ABHD17 family. Palmitoylated on cysteine residues located in a cysteine cluster at the N-terminus which promotes membrane localization. Palmitoylation is required for post-synaptic localization and for depalmitoylating activity towards DLG4/PSD95. In terms of tissue distribution, expressed in brain (at protein level). Expressed in hippocampal neurons.

It is found in the cell membrane. Its subcellular location is the recycling endosome membrane. The protein localises to the cell projection. It localises to the dendritic spine. The protein resides in the postsynaptic density membrane. The catalysed reaction is S-hexadecanoyl-L-cysteinyl-[protein] + H2O = L-cysteinyl-[protein] + hexadecanoate + H(+). Functionally, hydrolyzes fatty acids from S-acylated cysteine residues in proteins. Has depalmitoylating activity towards NRAS. Has depalmitoylating activity towards DLG4/PSD95. May have depalmitoylating activity towards MAP6. The chain is Alpha/beta hydrolase domain-containing protein 17A from Rattus norvegicus (Rat).